Here is a 299-residue protein sequence, read N- to C-terminus: Oxygen-dependent coproporphyrinogen-III oxidase (299 aa).

S92 contributes to the substrate binding site. H96 and H106 together coordinate a divalent metal cation. H106 (proton donor) is an active-site residue. A substrate-binding site is contributed by 108 to 110 (NVR). Residues H145 and H175 each coordinate a divalent metal cation. An important for dimerization region spans residues 240 to 275 (YVEFNLVWDRGTLFGLQTGGRTESILMSMPPLVRWE). 258–260 (GGR) provides a ligand contact to substrate.

Belongs to the aerobic coproporphyrinogen-III oxidase family. Homodimer. Requires a divalent metal cation as cofactor.

Its subcellular location is the cytoplasm. The enzyme catalyses coproporphyrinogen III + O2 + 2 H(+) = protoporphyrinogen IX + 2 CO2 + 2 H2O. Its pathway is porphyrin-containing compound metabolism; protoporphyrin-IX biosynthesis; protoporphyrinogen-IX from coproporphyrinogen-III (O2 route): step 1/1. Involved in the heme biosynthesis. Catalyzes the aerobic oxidative decarboxylation of propionate groups of rings A and B of coproporphyrinogen-III to yield the vinyl groups in protoporphyrinogen-IX. This Salmonella enteritidis PT4 (strain P125109) protein is Oxygen-dependent coproporphyrinogen-III oxidase.